Here is a 443-residue protein sequence, read N- to C-terminus: Frizzled/smoothened-like sans CRD protein E (443 aa).

The signal sequence occupies residues Met-1 to Ser-23. Residues Asn-24–Lys-83 are Extracellular-facing. Asn-47 carries an N-linked (GlcNAc...) asparagine glycan. The helical transmembrane segment at Val-84–Ile-104 threads the bilayer. Residues Thr-105–Thr-120 are Cytoplasmic-facing. The helical transmembrane segment at Val-121–Leu-141 threads the bilayer. Over Trp-142–Cys-166 the chain is Extracellular. The helical transmembrane segment at Leu-167–Ile-187 threads the bilayer. The Cytoplasmic portion of the chain corresponds to Ser-188–Lys-203. Residues Leu-204 to Val-224 traverse the membrane as a helical segment. Residues Gly-225–Gly-248 are Extracellular-facing. The chain crosses the membrane as a helical span at residues Tyr-249–Leu-269. At Lys-270–Lys-289 the chain is on the cytoplasmic side. Residues Pro-290–Tyr-310 traverse the membrane as a helical segment. At Thr-311 to His-350 the chain is on the extracellular side. The chain crosses the membrane as a helical span at residues Phe-351–Thr-371. The Cytoplasmic portion of the chain corresponds to Arg-372–Pro-443. Low complexity-rich tracts occupy residues Ser-397 to Ser-410 and Glu-419 to Glu-432. The segment at Ser-397–Pro-443 is disordered.

Belongs to the G-protein coupled receptor Fz/Smo family.

The protein localises to the membrane. The polypeptide is Frizzled/smoothened-like sans CRD protein E (fscE) (Dictyostelium discoideum (Social amoeba)).